The following is an 81-amino-acid chain: Sulfur carrier protein TusA (81 aa).

Cysteine 19 (cysteine persulfide intermediate) is an active-site residue.

This sequence belongs to the sulfur carrier protein TusA family.

The protein resides in the cytoplasm. Its function is as follows. Sulfur carrier protein which probably makes part of a sulfur-relay system. The sequence is that of Sulfur carrier protein TusA from Shewanella sediminis (strain HAW-EB3).